Reading from the N-terminus, the 48-residue chain is uncharacterized protein (48 aa).

Belongs to the ELIP/psbS family.

Its subcellular location is the plastid. The protein localises to the chloroplast. In terms of biological role, possible role in chlorophyll and/or carotenoid binding. This is an uncharacterized protein from Pyropia yezoensis (Susabi-nori).